The following is a 207-amino-acid chain: Guanylate kinase (207 aa).

Positions 5–184 (GNLFIVSAPS…ALADLRAIIR (180 aa)) constitute a Guanylate kinase-like domain. ATP is bound at residue 12 to 19 (APSGAGKS).

This sequence belongs to the guanylate kinase family.

The protein resides in the cytoplasm. The catalysed reaction is GMP + ATP = GDP + ADP. Essential for recycling GMP and indirectly, cGMP. The chain is Guanylate kinase from Shewanella sp. (strain MR-7).